A 1157-amino-acid polypeptide reads, in one-letter code: Probable ATP-dependent RNA helicase DHX37 (1157 aa).

Residues 1–10 are compositionally biased toward basic residues; the sequence is MGKLRRRYNI. Disordered stretches follow at residues 1-77 and 116-225; these read MGKL…KKEK and TSKL…AAPP. A compositionally biased stretch (pro residues) spans 21 to 30; it reads SKGPPEPPPV. Residues 159–184 show a composition bias toward acidic residues; it reads AEEEEEEEEESESELEEESELDEDPA. Pro residues-rich tracts occupy residues 198 to 208 and 216 to 225; these read PLPPAPAPSSQ and VPPPPAAAPP. The 168-residue stretch at 262 to 429 folds into the Helicase ATP-binding domain; that stretch reads MEAVAEHPIV…PRLFAKPPPV (168 aa). 275–282 contacts ATP; that stretch reads GETGSGKT. A DEAH box motif is present at residues 372–375; that stretch reads DEAH. The 258-residue stretch at 459–716 folds into the Helicase C-terminal domain; sequence KVCKIHRMLP…DLILQMKALN (258 aa). Disordered regions lie at residues 494–523 and 542–584; these read PPSRARPQEKDDDQKDSVEEMRKFKKSRAR and VLPA…QPDA. Residues 499–515 are compositionally biased toward basic and acidic residues; sequence RPQEKDDDQKDSVEEMR. Positions 547 to 571 are enriched in acidic residues; the sequence is EGDEDREAEVDEEEGALDSDLDLDL.

Belongs to the DEAD box helicase family. DEAH subfamily. As to quaternary structure, part of the small subunit (SSU) processome, composed of more than 70 proteins and the RNA chaperone small nucleolar RNA (snoRNA) U3. Interacts with UTP14A. In terms of tissue distribution, expressed in the fallopian tube, ovary, uterus and testis. Also expressed in the brain.

It localises to the nucleus. It is found in the nucleolus. Its subcellular location is the cytoplasm. The protein resides in the nucleus membrane. The catalysed reaction is ATP + H2O = ADP + phosphate + H(+). Its function is as follows. ATP-binding RNA helicase that plays a role in maturation of the small ribosomal subunit in ribosome biogenesis. Required for the release of the U3 snoRNP from pre-ribosomal particles. Part of the small subunit (SSU) processome, first precursor of the small eukaryotic ribosomal subunit. During the assembly of the SSU processome in the nucleolus, many ribosome biogenesis factors, an RNA chaperone and ribosomal proteins associate with the nascent pre-rRNA and work in concert to generate RNA folding, modifications, rearrangements and cleavage as well as targeted degradation of pre-ribosomal RNA by the RNA exosome. Plays a role in early testis development. Probably also plays a role in brain development. The sequence is that of Probable ATP-dependent RNA helicase DHX37 from Homo sapiens (Human).